Reading from the N-terminus, the 456-residue chain is Bifunctional protein GlmU (456 aa).

Positions 1-229 are pyrophosphorylase; it reads MLNNAMSVVI…LSEVEGVNNR (229 aa). UDP-N-acetyl-alpha-D-glucosamine contacts are provided by residues 11 to 14, K25, Q76, 81 to 82, 103 to 105, G140, E154, N169, and N227; these read LAAG, GT, and YGD. D105 contacts Mg(2+). N227 provides a ligand contact to Mg(2+). The tract at residues 230–250 is linker; the sequence is LQLSRLERVYQSEQAEKLLLA. The N-acetyltransferase stretch occupies residues 251–456; it reads GVMLRDPARF…EGWRRPVKKK (206 aa). UDP-N-acetyl-alpha-D-glucosamine-binding residues include R333 and K351. The active-site Proton acceptor is H363. UDP-N-acetyl-alpha-D-glucosamine-binding residues include Y366 and N377. Residues A380, 386-387, S405, A423, and R440 contribute to the acetyl-CoA site; that span reads NY.

This sequence in the N-terminal section; belongs to the N-acetylglucosamine-1-phosphate uridyltransferase family. In the C-terminal section; belongs to the transferase hexapeptide repeat family. Homotrimer. The cofactor is Mg(2+).

Its subcellular location is the cytoplasm. The enzyme catalyses alpha-D-glucosamine 1-phosphate + acetyl-CoA = N-acetyl-alpha-D-glucosamine 1-phosphate + CoA + H(+). It catalyses the reaction N-acetyl-alpha-D-glucosamine 1-phosphate + UTP + H(+) = UDP-N-acetyl-alpha-D-glucosamine + diphosphate. It functions in the pathway nucleotide-sugar biosynthesis; UDP-N-acetyl-alpha-D-glucosamine biosynthesis; N-acetyl-alpha-D-glucosamine 1-phosphate from alpha-D-glucosamine 6-phosphate (route II): step 2/2. It participates in nucleotide-sugar biosynthesis; UDP-N-acetyl-alpha-D-glucosamine biosynthesis; UDP-N-acetyl-alpha-D-glucosamine from N-acetyl-alpha-D-glucosamine 1-phosphate: step 1/1. Its pathway is bacterial outer membrane biogenesis; LPS lipid A biosynthesis. In terms of biological role, catalyzes the last two sequential reactions in the de novo biosynthetic pathway for UDP-N-acetylglucosamine (UDP-GlcNAc). The C-terminal domain catalyzes the transfer of acetyl group from acetyl coenzyme A to glucosamine-1-phosphate (GlcN-1-P) to produce N-acetylglucosamine-1-phosphate (GlcNAc-1-P), which is converted into UDP-GlcNAc by the transfer of uridine 5-monophosphate (from uridine 5-triphosphate), a reaction catalyzed by the N-terminal domain. The polypeptide is Bifunctional protein GlmU (Escherichia coli O8 (strain IAI1)).